The following is a 348-amino-acid chain: Holliday junction branch migration complex subunit RuvB (348 aa).

The interval 3–183 (DDGLVSAAAS…FGFTAHLDFY (181 aa)) is large ATPase domain (RuvB-L). Residues L22, R23, G64, K67, T68, S69, 130-132 (EDF), R173, Y183, and R220 contribute to the ATP site. T68 is a binding site for Mg(2+). A small ATPAse domain (RuvB-S) region spans residues 184-254 (DADELARVLT…IAQAALRIYD (71 aa)). The head domain (RuvB-H) stretch occupies residues 257-348 (GLGLDRLDRA…TQVSLFTEGE (92 aa)). Residues R312 and R317 each contribute to the DNA site.

Belongs to the RuvB family. As to quaternary structure, homohexamer. Forms an RuvA(8)-RuvB(12)-Holliday junction (HJ) complex. HJ DNA is sandwiched between 2 RuvA tetramers; dsDNA enters through RuvA and exits via RuvB. An RuvB hexamer assembles on each DNA strand where it exits the tetramer. Each RuvB hexamer is contacted by two RuvA subunits (via domain III) on 2 adjacent RuvB subunits; this complex drives branch migration. In the full resolvosome a probable DNA-RuvA(4)-RuvB(12)-RuvC(2) complex forms which resolves the HJ.

Its subcellular location is the cytoplasm. It catalyses the reaction ATP + H2O = ADP + phosphate + H(+). In terms of biological role, the RuvA-RuvB-RuvC complex processes Holliday junction (HJ) DNA during genetic recombination and DNA repair, while the RuvA-RuvB complex plays an important role in the rescue of blocked DNA replication forks via replication fork reversal (RFR). RuvA specifically binds to HJ cruciform DNA, conferring on it an open structure. The RuvB hexamer acts as an ATP-dependent pump, pulling dsDNA into and through the RuvAB complex. RuvB forms 2 homohexamers on either side of HJ DNA bound by 1 or 2 RuvA tetramers; 4 subunits per hexamer contact DNA at a time. Coordinated motions by a converter formed by DNA-disengaged RuvB subunits stimulates ATP hydrolysis and nucleotide exchange. Immobilization of the converter enables RuvB to convert the ATP-contained energy into a lever motion, pulling 2 nucleotides of DNA out of the RuvA tetramer per ATP hydrolyzed, thus driving DNA branch migration. The RuvB motors rotate together with the DNA substrate, which together with the progressing nucleotide cycle form the mechanistic basis for DNA recombination by continuous HJ branch migration. Branch migration allows RuvC to scan DNA until it finds its consensus sequence, where it cleaves and resolves cruciform DNA. In Frankia casuarinae (strain DSM 45818 / CECT 9043 / HFP020203 / CcI3), this protein is Holliday junction branch migration complex subunit RuvB.